Reading from the N-terminus, the 162-residue chain is NADH-quinone oxidoreductase subunit I (162 aa).

2 consecutive 4Fe-4S ferredoxin-type domains span residues 54-83 and 93-122; these read RRYE…INST and SSYE…ETNI. Cys63, Cys66, Cys69, Cys73, Cys102, Cys105, Cys108, and Cys112 together coordinate [4Fe-4S] cluster.

This sequence belongs to the complex I 23 kDa subunit family. As to quaternary structure, NDH-1 is composed of 14 different subunits. Subunits NuoA, H, J, K, L, M, N constitute the membrane sector of the complex. Requires [4Fe-4S] cluster as cofactor.

The protein resides in the cell inner membrane. The enzyme catalyses a quinone + NADH + 5 H(+)(in) = a quinol + NAD(+) + 4 H(+)(out). Functionally, NDH-1 shuttles electrons from NADH, via FMN and iron-sulfur (Fe-S) centers, to quinones in the respiratory chain. The immediate electron acceptor for the enzyme in this species is believed to be ubiquinone. Couples the redox reaction to proton translocation (for every two electrons transferred, four hydrogen ions are translocated across the cytoplasmic membrane), and thus conserves the redox energy in a proton gradient. The polypeptide is NADH-quinone oxidoreductase subunit I (Francisella philomiragia subsp. philomiragia (strain ATCC 25017 / CCUG 19701 / FSC 153 / O#319-036)).